The primary structure comprises 520 residues: GMP synthase [glutamine-hydrolyzing] (520 aa).

One can recognise a Glutamine amidotransferase type-1 domain in the interval 12–205 (KIIVLDYGSQ…AIFICGARGD (194 aa)). The Nucleophile role is filled by cysteine 89. Catalysis depends on residues histidine 179 and glutamate 181. Residues 206 to 395 (WSMDNFIDMQ…LGMPENIVWR (190 aa)) enclose the GMPS ATP-PPase domain. 233 to 239 (SGGVDSS) is a binding site for ATP.

In terms of assembly, homodimer.

It catalyses the reaction XMP + L-glutamine + ATP + H2O = GMP + L-glutamate + AMP + diphosphate + 2 H(+). It participates in purine metabolism; GMP biosynthesis; GMP from XMP (L-Gln route): step 1/1. Its function is as follows. Catalyzes the synthesis of GMP from XMP. The protein is GMP synthase [glutamine-hydrolyzing] of Streptococcus uberis (strain ATCC BAA-854 / 0140J).